We begin with the raw amino-acid sequence, 840 residues long: Sorting nexin-25 (840 aa).

The 164-residue stretch at 1 to 164 folds into the PXA domain; the sequence is MDRVLRDVFD…MLLRQLEYRE (164 aa). Residues 287–401 form the RGS domain; sequence QFEDIMTNPF…LVSDLYEKLM (115 aa). The tract at residues 404–437 is disordered; that stretch reads EEEEEPDAQLASEKDELGSGGEAGEEAVEGTSGV. The stretch at 446–494 forms a coiled coil; sequence IKLRELNEKLEYKRQALSSIQNAPKPDKKIISKLKDEILLIEKECTALQ. In terms of domain architecture, PX spans 508-628; the sequence is GLWRASITSA…AFLSPSPDYL (121 aa). The residue at position 665 (S665) is a Phosphoserine.

It belongs to the sorting nexin family.

The protein resides in the endosome membrane. May be involved in several stages of intracellular trafficking. This Mus musculus (Mouse) protein is Sorting nexin-25 (Snx25).